An 875-amino-acid polypeptide reads, in one-letter code: Cell surface glycoprotein (875 aa).

Residues 1-23 (MTNTKQKINAVFLSALMVMSVFA) form the signal peptide. Positions 137–157 (EVQNGGSGDVTGSTLQTSSSG) are enriched in polar residues. 2 disordered regions span residues 137-158 (EVQN…SSGP) and 197-217 (LPTA…DFDV). Low complexity predominate over residues 205 to 216 (DNGASGSNGDFD). The N-linked (GlcNAc...) asparagine glycan is linked to asparagine 253. The disordered stretch occupies residues 380–414 (YPASDSSNDGYASGGSHASSVTVRDTDGDGTDDSE). A compositionally biased stretch (polar residues) spans 383 to 402 (SDSSNDGYASGGSHASSVTV). 4 N-linked (GlcNAc...) asparagine glycosylation sites follow: asparagine 455, asparagine 563, asparagine 715, and asparagine 774. Positions 794 to 852 (EAGSLEEEQPDTETPEPDTETPEPDTETPEPDTETPEPDTETPEPDTETEEATTEASGP) are disordered. Positions 797 to 846 (SLEEEQPDTETPEPDTETPEPDTETPEPDTETPEPDTETPEPDTETEEAT) are enriched in acidic residues. A helical transmembrane segment spans residues 851-875 (GPGFTAAIALIALVAAALLAVRRDN). The PGF sorting signal signature appears at 852-854 (PGF).

Belongs to the halobacterial S-layer protein family. Post-translationally, asn-455 is glycosylated by a pentasaccharide comprising a hexose, 2 hexuronic acids, a methyl ester of a hexuronic acid and a final hexose. The complete pentasaccharide is first assembled on dolichol phosphate and then transferred the glycan to the target Asn. Cleaved by the archaeosortase ArtA at the C-terminus, with removal of a short hydrophobic segment. In terms of processing, lipidation.

It localises to the secreted. The protein localises to the cell wall. It is found in the S-layer. Its subcellular location is the cell membrane. S-layer protein. The S-layer is a paracrystalline mono-layered assembly of proteins which coat the surface of the cell. This is Cell surface glycoprotein (csg1) from Haloarcula marismortui (strain ATCC 43049 / DSM 3752 / JCM 8966 / VKM B-1809) (Halobacterium marismortui).